Consider the following 183-residue polypeptide: Protein jagunal homolog 1 (183 aa).

Residues 1–39 (MASRAGPRAAGTDGSDFQHRERVAMHYQMSVTLKYEIKK) lie on the Cytoplasmic side of the membrane. Ser3 carries the post-translational modification Phosphoserine. Residues 40-60 (LIYVHLVIWLLLVAKMSVGHL) form a helical membrane-spanning segment. Topologically, residues 61–71 (RLLSHDQVAMP) are lumenal. Residues 72–92 (YQWEYPYLLSIVPSVLGLLSF) traverse the membrane as a helical segment. Topologically, residues 93–96 (PRNN) are cytoplasmic. The helical transmembrane segment at 97–117 (ISYLVLSMISMGLFSIAPLIY) threads the bilayer. Topologically, residues 118-137 (GSMEMFPAAQQLYRHGKAYR) are lumenal. A helical membrane pass occupies residues 138–158 (FLFGFSAVSVMYLVLVLAVQV). Topologically, residues 159-183 (HAWQLYYSKKLLDSWFTSTQEKKRK) are cytoplasmic.

Belongs to the jagunal family. In terms of assembly, interacts with COPA, COPB2 and COPG2.

It localises to the endoplasmic reticulum membrane. In terms of biological role, endoplasmic reticulum transmembrane protein involved in vesicle-mediated transport, which is required for neutrophil function. Required for vesicle-mediated transport; it is however unclear whether it is involved in early secretory pathway or intracellular protein transport. Acts as a regulator of neutrophil function, probably via its role in vesicle-mediated transport: required for defense against fungal pathogens and for granulocyte colony-stimulating factor (GM-CSF) signaling pathway; possibly by regulating glycosylation and/or targeting of proteins contributing to the viability and migration of neutrophils. The chain is Protein jagunal homolog 1 from Mus musculus (Mouse).